Consider the following 127-residue polypeptide: Ribonuclease P protein component 1 (127 aa).

Belongs to the eukaryotic/archaeal RNase P protein component 1 family. Consists of a catalytic RNA component and at least 4-5 protein subunits.

The protein localises to the cytoplasm. The catalysed reaction is Endonucleolytic cleavage of RNA, removing 5'-extranucleotides from tRNA precursor.. Functionally, part of ribonuclease P, a protein complex that generates mature tRNA molecules by cleaving their 5'-ends. The polypeptide is Ribonuclease P protein component 1 (Pyrococcus abyssi (strain GE5 / Orsay)).